A 109-amino-acid chain; its full sequence is Large ribosomal subunit protein uL23 (109 aa).

It belongs to the universal ribosomal protein uL23 family. As to quaternary structure, part of the 50S ribosomal subunit. Contacts protein L29, and trigger factor when it is bound to the ribosome.

One of the early assembly proteins it binds 23S rRNA. One of the proteins that surrounds the polypeptide exit tunnel on the outside of the ribosome. Forms the main docking site for trigger factor binding to the ribosome. In Haemophilus influenzae (strain PittEE), this protein is Large ribosomal subunit protein uL23.